Reading from the N-terminus, the 183-residue chain is Endoribonuclease YbeY (183 aa).

3 residues coordinate Zn(2+): His-142, His-146, and His-152.

The protein belongs to the endoribonuclease YbeY family. The cofactor is Zn(2+).

Its subcellular location is the cytoplasm. Its function is as follows. Single strand-specific metallo-endoribonuclease involved in late-stage 70S ribosome quality control and in maturation of the 3' terminus of the 16S rRNA. This Trichodesmium erythraeum (strain IMS101) protein is Endoribonuclease YbeY.